The sequence spans 246 residues: Proteasome subunit alpha type-6-A (246 aa).

This sequence belongs to the peptidase T1A family. As to quaternary structure, component of the 20S core complex of the 26S proteasome. The 26S proteasome is composed of a core protease (CP), known as the 20S proteasome, capped at one or both ends by the 19S regulatory particle (RP/PA700). The 20S proteasome core is composed of 28 subunits that are arranged in four stacked rings, resulting in a barrel-shaped structure. The two end rings are each formed by seven alpha subunits, and the two central rings are each formed by seven beta subunits. The catalytic chamber with the active sites is on the inside of the barrel. Ubiquitous low levels, higher expression in siliques and flowers.

The protein localises to the cytoplasm. It localises to the nucleus. Functionally, the proteasome is a multicatalytic proteinase complex which is characterized by its ability to cleave peptides with Arg, Phe, Tyr, Leu, and Glu adjacent to the leaving group at neutral or slightly basic pH. The proteasome has an ATP-dependent proteolytic activity. This Arabidopsis thaliana (Mouse-ear cress) protein is Proteasome subunit alpha type-6-A (PAA1).